The following is a 3078-amino-acid chain: Probable polyketide synthase 34 (3078 aa).

The Ketosynthase family 3 (KS3) domain occupies 28-462 (SGDVAVIGIG…GSNVCLILSE (435 aa)). Active-site for beta-ketoacyl synthase activity residues include Cys200, His339, and His385. The acyl/malonyl transferase stretch occupies residues 665 to 698 (GVSADIIIGHSLGEISSSYCSGIIDFQTLCYLTY). The active-site For acyl/malonyl transferase activity is Ser675. The segment at 954–1083 (HEKIKNEGPS…GNFSLTKHNI (130 aa)) is N-terminal hotdog fold. One can recognise a PKS/mFAS DH domain in the interval 954–1264 (HEKIKNEGPS…CTIVGSNPDS (311 aa)). His995 serves as the catalytic Proton acceptor; for dehydratase activity. Positions 1099–1264 (NFTSISKQDL…CTIVGSNPDS (166 aa)) are C-terminal hotdog fold. Residue Asp1171 is the Proton donor; for dehydratase activity of the active site. Residues 1375-1396 (NINNNNNNNNNNNNNNNNNSNG) form a disordered region. Residues 2541 to 2618 (DNNEIIRSTI…QSIEIIKSAH (78 aa)) enclose the Carrier domain. Ser2578 bears the O-(pantetheine 4'-phosphoryl)serine mark. 2 disordered regions span residues 2617–2640 (AHNN…NNNN) and 2739–2761 (NKGS…DNNS). A compositionally biased stretch (low complexity) spans 2619 to 2640 (NNNNNNNNNNNNNNNNNNNNNN). Residues 2621-2652 (NNNNNNNNNNNNNNNNNNNNLVKKEQQSLDEF) are a coiled coil.

The cofactor is pantetheine 4'-phosphate.

Its function is as follows. Probable polyketide synthase. The sequence is that of Probable polyketide synthase 34 (pks34) from Dictyostelium discoideum (Social amoeba).